The sequence spans 351 residues: Small ribosomal subunit protein uS2 (351 aa).

The disordered stretch occupies residues Gln-302–Asn-351. The span at Thr-340–Asn-351 shows a compositional bias: basic and acidic residues.

This sequence belongs to the universal ribosomal protein uS2 family.

The sequence is that of Small ribosomal subunit protein uS2 from Ureaplasma urealyticum serovar 10 (strain ATCC 33699 / Western).